The following is an 877-amino-acid chain: DNA polymerase I (877 aa).

Positions 180-272 constitute a 5'-3' exonuclease domain; that stretch reads TPSQFIDLKA…GLEDTLLKEK (93 aa). The region spanning 312 to 468 is the 3'-5' exonuclease domain; that stretch reads FEIVTDKSSV…AKEKMMAELI (157 aa).

It belongs to the DNA polymerase type-A family. Single-chain monomer with multiple functions.

It catalyses the reaction DNA(n) + a 2'-deoxyribonucleoside 5'-triphosphate = DNA(n+1) + diphosphate. In addition to polymerase activity, this DNA polymerase exhibits 3'-5' and 5'-3' exonuclease activity. This Lactococcus lactis subsp. cremoris (strain MG1363) protein is DNA polymerase I (polA).